The primary structure comprises 1367 residues: Insulin-like growth factor 1 receptor (1367 aa).

A signal peptide spans 1–30; sequence MKSGSGGGSPTSLWGLLFLSAALSLWPTSG. A disulfide bond links Cys-33 and Cys-52. 3 N-linked (GlcNAc...) asparagine glycosylation sites follow: Asn-51, Asn-102, and Asn-135. Intrachain disulfides connect Cys-150/Cys-178, Cys-182/Cys-205, Cys-192/Cys-211, Cys-215/Cys-224, Cys-219/Cys-230, Cys-231/Cys-239, Cys-235/Cys-248, Cys-251/Cys-260, Cys-264/Cys-276, Cys-282/Cys-303, Cys-307/Cys-321, Cys-324/Cys-328, and Cys-332/Cys-353. Asn-244 carries an N-linked (GlcNAc...) asparagine glycan. An N-linked (GlcNAc...) asparagine glycan is attached at Asn-314. 2 N-linked (GlcNAc...) asparagine glycosylation sites follow: Asn-417 and Asn-438. Cys-455 and Cys-488 are disulfide-bonded. Fibronectin type-III domains follow at residues 491–609, 610–708, 735–828, and 834–927; these read DVLH…TNAS, VPSI…TEAE, PERK…TMPA, and IPGP…VQAK. Residues Asn-534, Asn-607, Asn-622, Asn-640, Asn-747, Asn-756, Asn-764, Asn-900, and Asn-913 are each glycosylated (N-linked (GlcNAc...) asparagine). Topologically, residues 741–935 are extracellular; it reads DVMQVANTTM…AKTGYENFIH (195 aa). The chain crosses the membrane as a helical span at residues 936 to 959; that stretch reads LIIALPVAVLLIVGGLVIMLYVFH. Topologically, residues 960–1367 are cytoplasmic; that stretch reads RKRNNSRLGN…ALPLPQSSTC (408 aa). The IRS1- and SHC1-binding motif lies at 977–980; that stretch reads NPEY. Phosphotyrosine is present on Tyr-980. The Protein kinase domain maps to 999 to 1274; the sequence is ITMSRELGQG…SIKEEMEPGF (276 aa). Residues 1005–1013 and Lys-1033 contribute to the ATP site; that span reads LGQGSFGMV. Catalysis depends on Asp-1135, which acts as the Proton acceptor. Residues Tyr-1161, Tyr-1165, and Tyr-1166 each carry the phosphotyrosine; by autocatalysis modification. Glycyl lysine isopeptide (Lys-Gly) (interchain with G-Cter in ubiquitin) cross-links involve residues Lys-1168 and Lys-1171. Ser-1278 carries the post-translational modification Phosphoserine; by GSK3-beta. Ser-1282 bears the Phosphoserine mark. The segment at 1288–1367 is disordered; the sequence is PEPEELDLEP…ALPLPQSSTC (80 aa). The segment covering 1290–1299 has biased composition (acidic residues); sequence PEELDLEPEN. The segment covering 1300 to 1316 has biased composition (low complexity); that stretch reads MESVPLDPSASSSSLPL. Residues 1317 to 1326 are compositionally biased toward basic and acidic residues; it reads PDRHSGHKAE.

The protein belongs to the protein kinase superfamily. Tyr protein kinase family. Insulin receptor subfamily. Tetramer of 2 alpha and 2 beta chains linked by disulfide bonds. The alpha chains contribute to the formation of the ligand-binding domain, while the beta chain carries the kinase domain. Interacts with PIK3R1 and with the PTB/PID domains of IRS1 and SHC1 in vitro when autophosphorylated on tyrosine residues. Forms a hybrid receptor with INSR, the hybrid is a tetramer consisting of 1 alpha chain and 1 beta chain of INSR and 1 alpha chain and 1 beta chain of IGF1R. Interacts with ARRB1 and ARRB2. Interacts with GRB10. Interacts with RACK1. Interacts with SOCS1, SOCS2 and SOCS3. Interacts with 14-3-3 proteins. Interacts with NMD2. Interacts with MAP3K5. Interacts with STAT3. Found in a ternary complex with IGF1 and ITGAV:ITGB3 or ITGA6:ITGB4. Interacts (nascent precursor form) with ZFAND2B. In terms of assembly, (Microbial infection) Interacts with human respiratory syncytial virus (HRSV) fusion glycoprotein F1/F2 heterodimer. Autophosphorylated on tyrosine residues in response to ligand binding. Autophosphorylation occurs in trans, i.e. one subunit of the dimeric receptor phosphorylates tyrosine residues on the other subunit. Autophosphorylation occurs in a sequential manner; Tyr-1165 is predominantly phosphorylated first, followed by phosphorylation of Tyr-1161 and Tyr-1166. While every single phosphorylation increases kinase activity, all three tyrosine residues in the kinase activation loop (Tyr-1165, Tyr-1161 and Tyr-1166) have to be phosphorylated for optimal activity. Can be autophosphorylated at additional tyrosine residues (in vitro). Autophosphorylated is followed by phosphorylation of juxtamembrane tyrosines and C-terminal serines. May also be phosphorylated at Tyr-1161 and Tyr-1166 by mTORC2. Phosphorylation of Tyr-980 is required for IRS1- and SHC1-binding. Phosphorylation of Ser-1278 by GSK-3beta restrains kinase activity and promotes cell surface expression, it requires a priming phosphorylation at Ser-1282. Dephosphorylated by PTPN1. In terms of processing, polyubiquitinated at Lys-1168 and Lys-1171 through both 'Lys-48' and 'Lys-29' linkages, promoting receptor endocytosis and subsequent degradation by the proteasome. Ubiquitination is facilitated by pre-existing phosphorylation. Post-translationally, sumoylated with SUMO1. Controlled by regulated intramembrane proteolysis (RIP). Undergoes metalloprotease-dependent constitutive ectodomain shedding to produce a membrane-anchored 52 kDa C-Terminal fragment which is further processed by presenilin gamma-secretase to yield an intracellular 50 kDa fragment. As to expression, found as a hybrid receptor with INSR in muscle, heart, kidney, adipose tissue, skeletal muscle, hepatoma, fibroblasts, spleen and placenta (at protein level). Expressed in a variety of tissues. Overexpressed in tumors, including melanomas, cancers of the colon, pancreas prostate and kidney.

The protein localises to the cell membrane. It catalyses the reaction L-tyrosyl-[protein] + ATP = O-phospho-L-tyrosyl-[protein] + ADP + H(+). Activated by autophosphorylation at Tyr-1165, Tyr-1161 and Tyr-1166 on the kinase activation loop; phosphorylation at all three tyrosine residues is required for optimal kinase activity. Inhibited by MSC1609119A-1, BMS-754807, PQIP, benzimidazole pyridinone, isoquinolinedione, bis-azaindole, 3-cyanoquinoline, 2,4-bis-arylamino-1,3-pyrimidine, pyrrolopyrimidine, pyrrole-5-carboxaldehyde, picropodophyllin (PPP), tyrphostin derivatives. While most inhibitors bind to the ATP binding pocket, MSC1609119A-1 functions as allosteric inhibitor and binds close to the DFG motif and the activation loop. In terms of biological role, receptor tyrosine kinase which mediates actions of insulin-like growth factor 1 (IGF1). Binds IGF1 with high affinity and IGF2 and insulin (INS) with a lower affinity. The activated IGF1R is involved in cell growth and survival control. IGF1R is crucial for tumor transformation and survival of malignant cell. Ligand binding activates the receptor kinase, leading to receptor autophosphorylation, and tyrosines phosphorylation of multiple substrates, that function as signaling adapter proteins including, the insulin-receptor substrates (IRS1/2), Shc and 14-3-3 proteins. Phosphorylation of IRSs proteins lead to the activation of two main signaling pathways: the PI3K-AKT/PKB pathway and the Ras-MAPK pathway. The result of activating the MAPK pathway is increased cellular proliferation, whereas activating the PI3K pathway inhibits apoptosis and stimulates protein synthesis. Phosphorylated IRS1 can activate the 85 kDa regulatory subunit of PI3K (PIK3R1), leading to activation of several downstream substrates, including protein AKT/PKB. AKT phosphorylation, in turn, enhances protein synthesis through mTOR activation and triggers the antiapoptotic effects of IGFIR through phosphorylation and inactivation of BAD. In parallel to PI3K-driven signaling, recruitment of Grb2/SOS by phosphorylated IRS1 or Shc leads to recruitment of Ras and activation of the ras-MAPK pathway. In addition to these two main signaling pathways IGF1R signals also through the Janus kinase/signal transducer and activator of transcription pathway (JAK/STAT). Phosphorylation of JAK proteins can lead to phosphorylation/activation of signal transducers and activators of transcription (STAT) proteins. In particular activation of STAT3, may be essential for the transforming activity of IGF1R. The JAK/STAT pathway activates gene transcription and may be responsible for the transforming activity. JNK kinases can also be activated by the IGF1R. IGF1 exerts inhibiting activities on JNK activation via phosphorylation and inhibition of MAP3K5/ASK1, which is able to directly associate with the IGF1R. Functionally, when present in a hybrid receptor with INSR, binds IGF1. PubMed:12138094 shows that hybrid receptors composed of IGF1R and INSR isoform Long are activated with a high affinity by IGF1, with low affinity by IGF2 and not significantly activated by insulin, and that hybrid receptors composed of IGF1R and INSR isoform Short are activated by IGF1, IGF2 and insulin. In contrast, PubMed:16831875 shows that hybrid receptors composed of IGF1R and INSR isoform Long and hybrid receptors composed of IGF1R and INSR isoform Short have similar binding characteristics, both bind IGF1 and have a low affinity for insulin. This Homo sapiens (Human) protein is Insulin-like growth factor 1 receptor (IGF1R).